The following is a 127-amino-acid chain: UPF0251 protein Ccel_0627 (127 aa).

The protein belongs to the UPF0251 family.

The protein is UPF0251 protein Ccel_0627 of Ruminiclostridium cellulolyticum (strain ATCC 35319 / DSM 5812 / JCM 6584 / H10) (Clostridium cellulolyticum).